The primary structure comprises 340 residues: DNA-directed RNA polymerase subunit alpha (340 aa).

An alpha N-terminal domain (alpha-NTD) region spans residues 1-238 (MADTFVAKNW…EQLTVFVNFD (238 aa)). The interval 253–340 (AKLNENLFRS…QAPAPAQPKA (88 aa)) is alpha C-terminal domain (alpha-CTD).

This sequence belongs to the RNA polymerase alpha chain family. In terms of assembly, homodimer. The RNAP catalytic core consists of 2 alpha, 1 beta, 1 beta' and 1 omega subunit. When a sigma factor is associated with the core the holoenzyme is formed, which can initiate transcription.

It catalyses the reaction RNA(n) + a ribonucleoside 5'-triphosphate = RNA(n+1) + diphosphate. Functionally, DNA-dependent RNA polymerase catalyzes the transcription of DNA into RNA using the four ribonucleoside triphosphates as substrates. This Myxococcus xanthus (strain DK1622) protein is DNA-directed RNA polymerase subunit alpha.